The following is a 163-amino-acid chain: UPF0478 protein SERP1299 (163 aa).

The helical transmembrane segment at 7–27 (IAGIIAAIAFLILCIGIVVVL) threads the bilayer.

Belongs to the UPF0478 family.

It localises to the cell membrane. This Staphylococcus epidermidis (strain ATCC 35984 / DSM 28319 / BCRC 17069 / CCUG 31568 / BM 3577 / RP62A) protein is UPF0478 protein SERP1299.